Here is an 812-residue protein sequence, read N- to C-terminus: Xaa-Pro dipeptidyl-peptidase (812 aa).

Active-site charge relay system residues include Ser-372, Asp-492, and His-523.

This sequence belongs to the peptidase S15 family. Homodimer.

It localises to the cytoplasm. The enzyme catalyses Hydrolyzes Xaa-Pro-|- bonds to release unblocked, N-terminal dipeptides from substrates including Ala-Pro-|-p-nitroanilide and (sequentially) Tyr-Pro-|-Phe-Pro-|-Gly-Pro-|-Ile.. Functionally, removes N-terminal dipeptides sequentially from polypeptides having unsubstituted N-termini provided that the penultimate residue is proline. This chain is Xaa-Pro dipeptidyl-peptidase, found in Pediococcus pentosaceus (strain ATCC 25745 / CCUG 21536 / LMG 10740 / 183-1w).